A 294-amino-acid polypeptide reads, in one-letter code: Protoheme IX farnesyltransferase 1 (294 aa).

9 helical membrane-spanning segments follow: residues 8–28 (VTKPGIIMGNLISVAGGFLLA), 35–55 (PWLMVATLIGLSLVVASGCAI), 82–102 (AMAALCHGVVLGIIGFGLLIA), 107–127 (AAVFFAAFGYFIYVGVYSLYM), 132–152 (VYGTFIGSLSGAVPPVVGYCA), 162–182 (LILLVMFSLWQMPHSYAIAIF), 208–228 (IVLYIAIYALVVMLLPISGYT), 229–249 (GAAFMAVACITSFWWLLMALR), and 263–283 (QVFAFSIINITALSIAMAVDY).

The protein belongs to the UbiA prenyltransferase family. Protoheme IX farnesyltransferase subfamily.

It is found in the cell inner membrane. The enzyme catalyses heme b + (2E,6E)-farnesyl diphosphate + H2O = Fe(II)-heme o + diphosphate. Its pathway is porphyrin-containing compound metabolism; heme O biosynthesis; heme O from protoheme: step 1/1. Its function is as follows. Converts heme B (protoheme IX) to heme O by substitution of the vinyl group on carbon 2 of heme B porphyrin ring with a hydroxyethyl farnesyl side group. The chain is Protoheme IX farnesyltransferase 1 from Pseudoalteromonas translucida (strain TAC 125).